The primary structure comprises 592 residues: E3 ubiquitin-protein ligase RNF180 (592 aa).

Residues M1–D564 lie on the Cytoplasmic side of the membrane. S231 carries the post-translational modification Phosphoserine. The interaction with ZIC2 stretch occupies residues Q282–A489. Residues C432–R474 form an RING-type zinc finger. A helical membrane pass occupies residues M565–L585. Residues C586–F592 are Extracellular-facing.

In terms of assembly, interacts with ZIC2. In terms of tissue distribution, brain, kidney, testis and uterus. membrane protein. Nucleus envelope.

It localises to the endoplasmic reticulum membrane. Its subcellular location is the nucleus envelope. The catalysed reaction is S-ubiquitinyl-[E2 ubiquitin-conjugating enzyme]-L-cysteine + [acceptor protein]-L-lysine = [E2 ubiquitin-conjugating enzyme]-L-cysteine + N(6)-ubiquitinyl-[acceptor protein]-L-lysine.. It functions in the pathway protein modification; protein ubiquitination. Functionally, E3 ubiquitin-protein ligase which promotes polyubiquitination and degradation by the proteasome pathway of ZIC2. This is E3 ubiquitin-protein ligase RNF180 (Rnf180) from Mus musculus (Mouse).